Reading from the N-terminus, the 457-residue chain is Hydrogenobyrinate a,c-diamide synthase (457 aa).

In terms of domain architecture, GATase cobBQ-type spans 255-441; sequence TVAIAAGRAF…LHTHPAATPG (187 aa). Cys-337 serves as the catalytic Nucleophile.

This sequence belongs to the CobB/CbiA family. The cofactor is Mg(2+).

The catalysed reaction is hydrogenobyrinate + 2 L-glutamine + 2 ATP + 2 H2O = hydrogenobyrinate a,c-diamide + 2 L-glutamate + 2 ADP + 2 phosphate + 2 H(+). The protein operates within cofactor biosynthesis; adenosylcobalamin biosynthesis; cob(II)yrinate a,c-diamide from precorrin-2 (aerobic route): step 9/10. In terms of biological role, catalyzes the ATP-dependent amidation of the two carboxylate groups at positions a and c of hydrogenobyrinate, using either L-glutamine or ammonia as the nitrogen source. This Mycobacterium bovis (strain ATCC BAA-935 / AF2122/97) protein is Hydrogenobyrinate a,c-diamide synthase.